The sequence spans 224 residues: Biosynthetic peptidoglycan transglycosylase (224 aa).

A helical transmembrane segment spans residues 12–32 (ILVVLAILPVFLLLVYSLPFV).

It belongs to the glycosyltransferase 51 family.

It is found in the cell inner membrane. The enzyme catalyses [GlcNAc-(1-&gt;4)-Mur2Ac(oyl-L-Ala-gamma-D-Glu-L-Lys-D-Ala-D-Ala)](n)-di-trans,octa-cis-undecaprenyl diphosphate + beta-D-GlcNAc-(1-&gt;4)-Mur2Ac(oyl-L-Ala-gamma-D-Glu-L-Lys-D-Ala-D-Ala)-di-trans,octa-cis-undecaprenyl diphosphate = [GlcNAc-(1-&gt;4)-Mur2Ac(oyl-L-Ala-gamma-D-Glu-L-Lys-D-Ala-D-Ala)](n+1)-di-trans,octa-cis-undecaprenyl diphosphate + di-trans,octa-cis-undecaprenyl diphosphate + H(+). The protein operates within cell wall biogenesis; peptidoglycan biosynthesis. In terms of biological role, peptidoglycan polymerase that catalyzes glycan chain elongation from lipid-linked precursors. The protein is Biosynthetic peptidoglycan transglycosylase of Brucella suis biovar 1 (strain 1330).